Consider the following 493-residue polypeptide: EGF-containing fibulin-like extracellular matrix protein 1 (493 aa).

The signal sequence occupies residues 1–17; the sequence is MLKALFLTMLTLALVKS. Residues 26-71 form the EGF-like 1; atypical domain; it reads YTQCTDGYEWDPVRQQCKDIDECDIVPDACKGGMKCVNHYGGYLCL. Positions 173-213 constitute an EGF-like 2; calcium-binding domain; the sequence is DIDECTAGTHNCRADQVCINLRGSFACQCPPGYQKRGEQCV. 15 disulfide bridges follow: Cys177–Cys190, Cys184–Cys199, Cys201–Cys212, Cys218–Cys228, Cys224–Cys237, Cys239–Cys252, Cys258–Cys268, Cys264–Cys277, Cys279–Cys292, Cys298–Cys309, Cys305–Cys318, Cys320–Cys332, Cys338–Cys350, Cys344–Cys359, and Cys365–Cys377. Residues 214-253 enclose the EGF-like 3; calcium-binding domain; the sequence is DIDECTIPPYCHQRCVNTPGSFYCQCSPGFQLAANNYTCV. N-linked (GlcNAc...) asparagine glycosylation occurs at Asn249. One can recognise an EGF-like 4; calcium-binding domain in the interval 254–293; sequence DINECDASNQCAQQCYNILGSFICQCNQGYELSSDRLNCE. The tract at residues 259-493 is mediates interaction with TIMP3; the sequence is DASNQCAQQC…LTIIVGPFSF (235 aa). Residues 294–333 enclose the EGF-like 5; calcium-binding domain; it reads DIDECRTSSYLCQYQCVNEPGKFSCMCPQGYQVVRSRTCQ. Residues 334–378 enclose the EGF-like 6; calcium-binding domain; sequence DINECETTNECREDEMCWNYHGGFRCYPRNPCQDPYILTPENRCV.

Belongs to the fibulin family. Interacts with ECM1. Interacts with TIMP3. In the eye, associated with photoreceptor outer and inner segment regions, the nerve fiber layer, outer nuclear layer and inner and outer plexiform layers of the retina.

It localises to the secreted. The protein resides in the extracellular space. It is found in the extracellular matrix. In terms of biological role, binds EGFR, the EGF receptor, inducing EGFR autophosphorylation and the activation of downstream signaling pathways. May play a role in cell adhesion and migration. May function as a negative regulator of chondrocyte differentiation. In the olfactory epithelium, it may regulate glial cell migration, differentiation and the ability of glial cells to support neuronal neurite outgrowth. The protein is EGF-containing fibulin-like extracellular matrix protein 1 (EFEMP1) of Homo sapiens (Human).